Consider the following 475-residue polypeptide: 3-isopropylmalate dehydratase large subunit (475 aa).

Residues C353, C414, and C417 each contribute to the [4Fe-4S] cluster site.

This sequence belongs to the aconitase/IPM isomerase family. LeuC type 1 subfamily. In terms of assembly, heterodimer of LeuC and LeuD. [4Fe-4S] cluster serves as cofactor.

It carries out the reaction (2R,3S)-3-isopropylmalate = (2S)-2-isopropylmalate. It functions in the pathway amino-acid biosynthesis; L-leucine biosynthesis; L-leucine from 3-methyl-2-oxobutanoate: step 2/4. In terms of biological role, catalyzes the isomerization between 2-isopropylmalate and 3-isopropylmalate, via the formation of 2-isopropylmaleate. The protein is 3-isopropylmalate dehydratase large subunit of Ectopseudomonas mendocina (strain ymp) (Pseudomonas mendocina).